Here is a 265-residue protein sequence, read N- to C-terminus: 3-methyl-2-oxobutanoate hydroxymethyltransferase (265 aa).

2 residues coordinate Mg(2+): Asp41 and Asp80. Residues 41–42 (DS), Asp80, and Lys109 contribute to the 3-methyl-2-oxobutanoate site. Glu111 lines the Mg(2+) pocket. The active-site Proton acceptor is Glu178.

Belongs to the PanB family. Homodecamer; pentamer of dimers. It depends on Mg(2+) as a cofactor.

It localises to the cytoplasm. It carries out the reaction 3-methyl-2-oxobutanoate + (6R)-5,10-methylene-5,6,7,8-tetrahydrofolate + H2O = 2-dehydropantoate + (6S)-5,6,7,8-tetrahydrofolate. It functions in the pathway cofactor biosynthesis; (R)-pantothenate biosynthesis; (R)-pantoate from 3-methyl-2-oxobutanoate: step 1/2. In terms of biological role, catalyzes the reversible reaction in which hydroxymethyl group from 5,10-methylenetetrahydrofolate is transferred onto alpha-ketoisovalerate to form ketopantoate. This chain is 3-methyl-2-oxobutanoate hydroxymethyltransferase, found in Thermosipho africanus (strain TCF52B).